The following is a 277-amino-acid chain: Large ribosomal subunit protein uL2 (277 aa).

The segment at 223–277 is disordered; it reads VVMNPIDHPHGGGEGRTSGGRHPVTPWGKPTKGKKTRSNKSTNKFILISRHKRKK.

Belongs to the universal ribosomal protein uL2 family. In terms of assembly, part of the 50S ribosomal subunit. Forms a bridge to the 30S subunit in the 70S ribosome.

In terms of biological role, one of the primary rRNA binding proteins. Required for association of the 30S and 50S subunits to form the 70S ribosome, for tRNA binding and peptide bond formation. It has been suggested to have peptidyltransferase activity; this is somewhat controversial. Makes several contacts with the 16S rRNA in the 70S ribosome. In Nitrobacter hamburgensis (strain DSM 10229 / NCIMB 13809 / X14), this protein is Large ribosomal subunit protein uL2.